A 322-amino-acid chain; its full sequence is Transcriptional activator protein Pur-alpha (322 aa).

Positions 1 to 55 (MADRDSGSEQGGAALGSGGSLGHPGSGSGSGGGGGGGGGGGGSGGGGGGAPGGLQ) are disordered. N-acetylalanine is present on Ala-2. Residues 9-52 (EQGGAALGSGGSLGHPGSGSGSGGGGGGGGGGGGSGGGGGGAPG) are compositionally biased toward gly residues. The stretch at 60-125 (ELASKRVDIQ…DFIEHYAQLG (66 aa)) is one PUR repeat I repeat. The PUR repeat II repeat unit spans residues 142–213 (ALKSEFLVRE…KLIDDYGVEE (72 aa)). A Phosphoserine modification is found at Ser-182. The stretch at 215-281 (PAELPEGTSL…CKYSEEMKKI (67 aa)) is one PUR repeat III repeat. Positions 295–314 (LHQQQQQQQEETAAATLLLQ) are enriched in low complexity. Residues 295-322 (LHQQQQQQQEETAAATLLLQGEEEGEED) form a disordered region.

This sequence belongs to the PUR DNA-binding protein family. Homodimer, heterodimer with PURB and heterotrimer with PURB and YBX1/Y-box protein 1. Interacts with FMR1; this interaction occurs in association with polyribosome.

It is found in the nucleus. Its function is as follows. This is a probable transcription activator that specifically binds the purine-rich single strand of the PUR element located upstream of the MYC gene. May play a role in the initiation of DNA replication and in recombination. This chain is Transcriptional activator protein Pur-alpha (PURA), found in Homo sapiens (Human).